The primary structure comprises 180 residues: ATP-dependent protease subunit HslV (180 aa).

Threonine 5 is a catalytic residue. Na(+) is bound by residues glycine 165, cysteine 168, and threonine 171.

Belongs to the peptidase T1B family. HslV subfamily. In terms of assembly, a double ring-shaped homohexamer of HslV is capped on each side by a ring-shaped HslU homohexamer. The assembly of the HslU/HslV complex is dependent on binding of ATP.

Its subcellular location is the cytoplasm. The enzyme catalyses ATP-dependent cleavage of peptide bonds with broad specificity.. Its activity is regulated as follows. Allosterically activated by HslU binding. Protease subunit of a proteasome-like degradation complex believed to be a general protein degrading machinery. This chain is ATP-dependent protease subunit HslV, found in Helicobacter pylori (strain J99 / ATCC 700824) (Campylobacter pylori J99).